We begin with the raw amino-acid sequence, 435 residues long: Metacaspase-1A (435 aa).

Disordered regions lie at residues 1-46 and 106-129; these read MQNH…APPP and YQNP…VAFG. The span at 36–46 shows a compositional bias: pro residues; the sequence is SPQPGYGAPPP. Catalysis depends on residues histidine 231 and cysteine 287.

The protein belongs to the peptidase C14B family.

In terms of biological role, involved in cell death (apoptosis). This chain is Metacaspase-1A (casA), found in Neosartorya fischeri (strain ATCC 1020 / DSM 3700 / CBS 544.65 / FGSC A1164 / JCM 1740 / NRRL 181 / WB 181) (Aspergillus fischerianus).